Here is a 314-residue protein sequence, read N- to C-terminus: Protein phosphatase PTC7 homolog fig (314 aa).

A PPM-type phosphatase domain is found at 43-309 (PYLVTVVQGR…DDITLILSSV (267 aa)). Residues Asp-87, Gly-88, and Asp-232 each coordinate Mn(2+).

It belongs to the PP2C family. Mg(2+) serves as cofactor. Requires Mn(2+) as cofactor.

It catalyses the reaction O-phospho-L-seryl-[protein] + H2O = L-seryl-[protein] + phosphate. The enzyme catalyses O-phospho-L-threonyl-[protein] + H2O = L-threonyl-[protein] + phosphate. This Drosophila simulans (Fruit fly) protein is Protein phosphatase PTC7 homolog fig.